A 183-amino-acid chain; its full sequence is Putative manganese efflux pump MntP 1 (183 aa).

The next 6 helical transmembrane spans lie at 6 to 26 (LFLL…CIGI), 36 to 56 (MIFV…GGYI), 64 to 84 (IVPI…ILMI), 100 to 120 (IMYL…GFTT), 130 to 150 (LFMS…LGII), and 158 to 178 (ISII…LFGL).

The protein belongs to the MntP (TC 9.B.29) family.

It localises to the cell membrane. Probably functions as a manganese efflux pump. The chain is Putative manganese efflux pump MntP 1 from Clostridium botulinum (strain Hall / ATCC 3502 / NCTC 13319 / Type A).